The chain runs to 464 residues: 3-isopropylmalate dehydratase large subunit (464 aa).

[4Fe-4S] cluster contacts are provided by C337, C397, and C400.

It belongs to the aconitase/IPM isomerase family. LeuC type 1 subfamily. Heterodimer of LeuC and LeuD. It depends on [4Fe-4S] cluster as a cofactor.

The enzyme catalyses (2R,3S)-3-isopropylmalate = (2S)-2-isopropylmalate. It functions in the pathway amino-acid biosynthesis; L-leucine biosynthesis; L-leucine from 3-methyl-2-oxobutanoate: step 2/4. Catalyzes the isomerization between 2-isopropylmalate and 3-isopropylmalate, via the formation of 2-isopropylmaleate. This chain is 3-isopropylmalate dehydratase large subunit, found in Bacillus anthracis (strain A0248).